Here is a 206-residue protein sequence, read N- to C-terminus: MRWSDSENNKIDYIEDFATHFLNKNALLNVICKFCVFRSNSDLWVMRPYQICATERILEKIKEDNRNSKNSKNASKGGCIWHSTGSGKTLTSFKAVQLASEIDFVDKVLFVVDRKDLDNQTIEEYEKFQAGSVSETENTNDLKEKILDDSTATRAIVTTIHKLKRLIDQRSKLKDEDLKKKNIVLIFDECHRSQFGKMKQEIDEFF.

Its function is as follows. The C-terminal section of a putative type I restriction enzyme that if reconstituted might recognize 5'-GAN(7)TAY-3' and cleave a random distance away. Subunit R is required for both nuclease and ATPase activities, but not for modification. The protein is Putative type I restriction enzyme MpnIIP endonuclease subunit C-terminal part of Mycoplasma pneumoniae (strain ATCC 29342 / M129 / Subtype 1) (Mycoplasmoides pneumoniae).